The chain runs to 177 residues: Large ribosomal subunit protein uL6 (177 aa).

It belongs to the universal ribosomal protein uL6 family. As to quaternary structure, part of the 50S ribosomal subunit.

Its function is as follows. This protein binds to the 23S rRNA, and is important in its secondary structure. It is located near the subunit interface in the base of the L7/L12 stalk, and near the tRNA binding site of the peptidyltransferase center. In Nitrosospira multiformis (strain ATCC 25196 / NCIMB 11849 / C 71), this protein is Large ribosomal subunit protein uL6.